The primary structure comprises 355 residues: MKIVADENLAFTDYFFSEFGEIQHRAGRLLTAHDVSDAEALLVRSVTKVNQALIEHSQLKFVGSATIGTDHLDISALQQQDILWSNAPGCNAQAVAEYVITALYHLDSDVFERGQDFTLGIIGLGNVGRRLAKMAALLGWNVIGCDPFVQLPDIHNLSFDDVLQKSDAISVHVPLTHSGSHPTFHLFDQHAFASMPASTILINSARGPVIEEQALIQDIYQTGRKVVLDVFEHEPVISEQLLDVVNLVTPHIAGYSLEGKARGTQMIYDAFCKVFGYEASKKFETQLPVCEPFFQQQDLKQILKAHLRAIYDIAQDDHNLRACVKDGQVDQCAFDQLRKEYPLRREWAAHGGPVA.

Substrate contacts are provided by Ser-45 and Thr-66. Residue Asp-146 participates in NAD(+) binding. Arg-206 is an active-site residue. Position 229 (Asp-229) interacts with NAD(+). Residue Glu-234 is part of the active site. His-251 functions as the Proton donor in the catalytic mechanism. Gly-254 contacts NAD(+). Tyr-255 contacts substrate.

The protein belongs to the D-isomer specific 2-hydroxyacid dehydrogenase family. PdxB subfamily. Homodimer.

It localises to the cytoplasm. The enzyme catalyses 4-phospho-D-erythronate + NAD(+) = (R)-3-hydroxy-2-oxo-4-phosphooxybutanoate + NADH + H(+). Its pathway is cofactor biosynthesis; pyridoxine 5'-phosphate biosynthesis; pyridoxine 5'-phosphate from D-erythrose 4-phosphate: step 2/5. Functionally, catalyzes the oxidation of erythronate-4-phosphate to 3-hydroxy-2-oxo-4-phosphonooxybutanoate. This chain is Erythronate-4-phosphate dehydrogenase, found in Acinetobacter baylyi (strain ATCC 33305 / BD413 / ADP1).